The primary structure comprises 256 residues: Imidazole glycerol phosphate synthase subunit HisF (256 aa).

Active-site residues include D11 and D130.

The protein belongs to the HisA/HisF family. Heterodimer of HisH and HisF.

Its subcellular location is the cytoplasm. It catalyses the reaction 5-[(5-phospho-1-deoxy-D-ribulos-1-ylimino)methylamino]-1-(5-phospho-beta-D-ribosyl)imidazole-4-carboxamide + L-glutamine = D-erythro-1-(imidazol-4-yl)glycerol 3-phosphate + 5-amino-1-(5-phospho-beta-D-ribosyl)imidazole-4-carboxamide + L-glutamate + H(+). The protein operates within amino-acid biosynthesis; L-histidine biosynthesis; L-histidine from 5-phospho-alpha-D-ribose 1-diphosphate: step 5/9. Its function is as follows. IGPS catalyzes the conversion of PRFAR and glutamine to IGP, AICAR and glutamate. The HisF subunit catalyzes the cyclization activity that produces IGP and AICAR from PRFAR using the ammonia provided by the HisH subunit. The sequence is that of Imidazole glycerol phosphate synthase subunit HisF from Prochlorococcus marinus (strain MIT 9215).